Here is a 367-residue protein sequence, read N- to C-terminus: MSESQTLVVKLGTSVLTGGSRRLNRAHIVELVRQCAQLHAMGHRIVIVTSGAIAAGREHLGYPELPATIASKQLLAAVGQSRLIQLWEQLFSIYGIHVGQMLLTRADMEDRERFLNARDTLRALLDNSIVPVINENDAVATAEIKVGDNDNLSALAAILAGADKLLLLTDQPGLFTADPRSNPQAELIKDVYGIDDALRAIAGDSVSGLGTGGMGTKLQAADVACRAGIDTIIAAGNRPDVIGHAMEGLPVGTCFHAQESPLENRKRWIFGAPPAGELTVDAGATQAILERGSSLLPKGIKIVSGNFSRGEVIRIRNSEGRDIAHGVSRYNSDALRLIAGQHSQQIDAILGYEYGPVAVHRDDMIIR.

K10 contacts ATP. 3 residues coordinate substrate: S50, D137, and N149. ATP-binding positions include 169 to 170 and 211 to 217; these read TD and TGGMGTK. In terms of domain architecture, PUA spans 275-353; the sequence is AGELTVDAGA…QQIDAILGYE (79 aa).

This sequence belongs to the glutamate 5-kinase family.

It is found in the cytoplasm. The enzyme catalyses L-glutamate + ATP = L-glutamyl 5-phosphate + ADP. It participates in amino-acid biosynthesis; L-proline biosynthesis; L-glutamate 5-semialdehyde from L-glutamate: step 1/2. In terms of biological role, catalyzes the transfer of a phosphate group to glutamate to form L-glutamate 5-phosphate. This Klebsiella pneumoniae (strain 342) protein is Glutamate 5-kinase.